The primary structure comprises 1217 residues: Endonuclease YhcR (1217 aa).

A signal peptide spans 1-46 (MLSVEMISRQNRCHYVYKGGNMMRRILHIVLITALMFLNVMYTFEA). The TNase-like domain occupies 376–517 (GEYEGIVDRV…KKDQKGIWNE (142 aa)). Residues R404, E412, and R460 contribute to the active site. The segment at 590–828 (LRILSMNDLH…VIFAAHNHQV (239 aa)) is phosphoesterase. Residues D597, H599, D647, N680, H792, and H824 each contribute to the a divalent metal cation site. A 5'-nucleotidase region spans residues 829 to 1085 (VNGEVNGKLI…AYTKEGRIKL (257 aa)). Residues F965 and 1035 to 1042 (FMATATGA) each bind substrate. The segment at 1087-1142 (EASDIEDPVTEDPITEEPGDDPGTEDPIKEDPRPGEDLPDIKETPGTAPVHQLPPS) is disordered. Over residues 1089–1110 (SDIEDPVTEDPITEEPGDDPGT) the composition is skewed to acidic residues. Residues 1112–1129 (DPIKEDPRPGEDLPDIKE) show a composition bias toward basic and acidic residues. The short motif at 1182-1186 (LPDTS) is the LPXTG sorting signal element. A Pentaglycyl murein peptidoglycan amidated threonine modification is found at T1185. A propeptide spans 1186 to 1217 (SAGYYNFMVIGAAVTLSGTYLYVRRKRSASRT) (removed by sortase).

In the C-terminal section; belongs to the 5'-nucleotidase family. The cofactor is Ca(2+). Mn(2+) is required as a cofactor.

Its subcellular location is the secreted. The protein localises to the cell wall. Requires a minimum of 0.1 mM of calcium for a significant activity. Maximal activity was observed with concentrations of calcium between 1 to 5 mM. Is 10-fold less active with the corresponding concentrations of manganese. Inhibited by NaCl at concentrations of 100 mM and higher. In terms of biological role, sugar-nonspecific endonuclease that yields nucleotide 3'-monophosphate products. No 5'-nucleotidase activity was detected, using 5'-AMP as the substrate, in the presence of diverse divalent metals and with various pH values. The polypeptide is Endonuclease YhcR (yhcR) (Bacillus subtilis (strain 168)).